The sequence spans 309 residues: Heme-dependent oxidative N-demethylase beta subunit (309 aa).

An FAD-binding FR-type domain is found at 2-103; that stretch reads STLLDVRVAA…SPPANLFPLH (102 aa). The 2Fe-2S ferredoxin-type domain occupies 226–309; it reads FRVELARSGQ…GCGSPILLDL (84 aa). [2Fe-2S] cluster is bound by residues cysteine 260, cysteine 265, cysteine 268, and cysteine 296.

The protein belongs to the PDR/VanB family. As to quaternary structure, the heme-dependent oxidative N-demethylase (HODM) is a heterotetramer composed of a catalytic alpha subunit, a FMN/2Fe-2S-dependent oxidoreductase beta subunit, a gamma subunit with putative aminotransferase activity, and a delta subunit of unknown function. [2Fe-2S] cluster is required as a cofactor. FMN serves as cofactor.

Component of the heme-dependent oxidative N-demethylase (HODM) enzyme, that catalyzes the NADPH-dependent oxidation of dimethylamine (DMA) to methylamine (MA) and formaldehyde. Functions in bacterial methylated amine catabolism, linking alkylamine oxidation to the tetrahydrofolate C1 pool. The beta subunit of HODM binds FMN and a 2Fe-2S cluster, and likely reduces the ferric heme iron of the alpha subunit to ferrous using NADPH. This is Heme-dependent oxidative N-demethylase beta subunit from Ectopseudomonas mendocina (strain ymp) (Pseudomonas mendocina).